Here is a 641-residue protein sequence, read N- to C-terminus: Choline O-acetyltransferase (641 aa).

A Phosphoserine modification is found at serine 17. The Proton acceptor role is filled by histidine 335. Position 366 is a phosphoserine (serine 366). CoA is bound by residues 413-425, serine 451, and glutamine 552; that span reads GKTFIKKQKCSPD. Residues 615–641 form a disordered region; the sequence is CSSRQPADSKPPTAKERARGPSQAKQS.

The protein belongs to the carnitine/choline acetyltransferase family.

It catalyses the reaction choline + acetyl-CoA = acetylcholine + CoA. Its function is as follows. Catalyzes the reversible synthesis of acetylcholine (ACh) from acetyl CoA and choline at cholinergic synapses. This Mus musculus (Mouse) protein is Choline O-acetyltransferase (Chat).